Here is a 166-residue protein sequence, read N- to C-terminus: Lipoprotein signal peptidase (166 aa).

The next 3 helical transmembrane spans lie at 10–30 (LIWL…KAWV), 68–88 (WQLW…AFWL), and 94–114 (GHWR…GNVI). Residues D124 and D142 contribute to the active site. Residues 138–158 (FNIADSAIVGGAIGIAVFGLF) traverse the membrane as a helical segment.

It belongs to the peptidase A8 family.

The protein localises to the cell inner membrane. It catalyses the reaction Release of signal peptides from bacterial membrane prolipoproteins. Hydrolyzes -Xaa-Yaa-Zaa-|-(S,diacylglyceryl)Cys-, in which Xaa is hydrophobic (preferably Leu), and Yaa (Ala or Ser) and Zaa (Gly or Ala) have small, neutral side chains.. It functions in the pathway protein modification; lipoprotein biosynthesis (signal peptide cleavage). This protein specifically catalyzes the removal of signal peptides from prolipoproteins. In Xanthomonas oryzae pv. oryzae (strain MAFF 311018), this protein is Lipoprotein signal peptidase.